The primary structure comprises 599 residues: Sulfite reductase [NADPH] flavoprotein alpha-component (599 aa).

The Flavodoxin-like domain maps to Ile-63–Val-201. FMN-binding positions include Ser-69–Ala-74, Ser-116–Gly-119, and Leu-152–Cys-161. Residues Glu-234–Pro-448 form the FAD-binding FR-type domain. FAD contacts are provided by residues Thr-322, His-356, Arg-386 to Ser-389, Thr-404 to Gly-406, Tyr-410, and Gly-419 to Ser-422. Residues Ser-519 to Arg-520, Lys-525 to Gln-529, and Asp-561 each bind NADP(+). FAD is bound at residue Tyr-599.

It belongs to the NADPH-dependent sulphite reductase flavoprotein subunit CysJ family. The protein in the N-terminal section; belongs to the flavodoxin family. In the C-terminal section; belongs to the flavoprotein pyridine nucleotide cytochrome reductase family. In terms of assembly, alpha(8)-beta(8). The alpha component is a flavoprotein, the beta component is a hemoprotein. It depends on FAD as a cofactor. FMN is required as a cofactor.

It catalyses the reaction hydrogen sulfide + 3 NADP(+) + 3 H2O = sulfite + 3 NADPH + 4 H(+). The protein operates within sulfur metabolism; hydrogen sulfide biosynthesis; hydrogen sulfide from sulfite (NADPH route): step 1/1. Functionally, component of the sulfite reductase complex that catalyzes the 6-electron reduction of sulfite to sulfide. This is one of several activities required for the biosynthesis of L-cysteine from sulfate. The flavoprotein component catalyzes the electron flow from NADPH -&gt; FAD -&gt; FMN to the hemoprotein component. This is Sulfite reductase [NADPH] flavoprotein alpha-component from Serratia proteamaculans (strain 568).